The chain runs to 263 residues: Ribosomal RNA small subunit methyltransferase A (263 aa).

The S-adenosyl-L-methionine site is built by Ile-18, Gly-43, Glu-65, Asp-91, and Asn-110.

Belongs to the class I-like SAM-binding methyltransferase superfamily. rRNA adenine N(6)-methyltransferase family. RsmA subfamily.

The protein resides in the cytoplasm. It catalyses the reaction adenosine(1518)/adenosine(1519) in 16S rRNA + 4 S-adenosyl-L-methionine = N(6)-dimethyladenosine(1518)/N(6)-dimethyladenosine(1519) in 16S rRNA + 4 S-adenosyl-L-homocysteine + 4 H(+). Functionally, specifically dimethylates two adjacent adenosines (A1518 and A1519) in the loop of a conserved hairpin near the 3'-end of 16S rRNA in the 30S particle. May play a critical role in biogenesis of 30S subunits. The chain is Ribosomal RNA small subunit methyltransferase A from Ehrlichia chaffeensis (strain ATCC CRL-10679 / Arkansas).